A 212-amino-acid polypeptide reads, in one-letter code: Pyrrolidone-carboxylate peptidase (212 aa).

Catalysis depends on residues Glu-78, Cys-141, and His-165.

It belongs to the peptidase C15 family. In terms of assembly, homotetramer.

The protein localises to the cytoplasm. The enzyme catalyses Release of an N-terminal pyroglutamyl group from a polypeptide, the second amino acid generally not being Pro.. Its function is as follows. Removes 5-oxoproline from various penultimate amino acid residues except L-proline. The polypeptide is Pyrrolidone-carboxylate peptidase (Staphylococcus aureus (strain bovine RF122 / ET3-1)).